The chain runs to 549 residues: CTP synthase (549 aa).

Residues 1–272 (MPPKSTTTKH…DAYVVRKLDL (272 aa)) are amidoligase domain. Ser-19 contacts CTP. Residue Ser-19 coordinates UTP. ATP is bound by residues 20–25 (SLGKGL) and Asp-77. Residues Asp-77 and Glu-146 each contribute to the Mg(2+) site. CTP is bound by residues 153–155 (DIE), 193–198 (KTKPTQ), and Lys-229. UTP contacts are provided by residues 193-198 (KTKPTQ) and Lys-229. In terms of domain architecture, Glutamine amidotransferase type-1 spans 297–548 (NLALVGKYID…VKAAVERKTG (252 aa)). Gly-360 is an L-glutamine binding site. The active-site Nucleophile; for glutamine hydrolysis is Cys-387. L-glutamine-binding positions include 388–391 (LGLQ), Glu-411, and Arg-473. Residues His-521 and Glu-523 contribute to the active site.

The protein belongs to the CTP synthase family. As to quaternary structure, homotetramer.

The enzyme catalyses UTP + L-glutamine + ATP + H2O = CTP + L-glutamate + ADP + phosphate + 2 H(+). It carries out the reaction L-glutamine + H2O = L-glutamate + NH4(+). The catalysed reaction is UTP + NH4(+) + ATP = CTP + ADP + phosphate + 2 H(+). It participates in pyrimidine metabolism; CTP biosynthesis via de novo pathway; CTP from UDP: step 2/2. Its activity is regulated as follows. Allosterically activated by GTP, when glutamine is the substrate; GTP has no effect on the reaction when ammonia is the substrate. The allosteric effector GTP functions by stabilizing the protein conformation that binds the tetrahedral intermediate(s) formed during glutamine hydrolysis. Inhibited by the product CTP, via allosteric rather than competitive inhibition. Its function is as follows. Catalyzes the ATP-dependent amination of UTP to CTP with either L-glutamine or ammonia as the source of nitrogen. Regulates intracellular CTP levels through interactions with the four ribonucleotide triphosphates. The polypeptide is CTP synthase (Streptomyces avermitilis (strain ATCC 31267 / DSM 46492 / JCM 5070 / NBRC 14893 / NCIMB 12804 / NRRL 8165 / MA-4680)).